The chain runs to 117 residues: Immunoglobulin heavy variable 1-84 (117 aa).

Positions 1–19 (MGWSWIFLFLLSGTAGVHC) are cleaved as a signal peptide. The tract at residues 20–49 (QIQLQQSGPELVKPGASVKISCKASGYTFT) is framework-1. The region spanning 31 to 117 (VKPGASVKIS…EDSAVYFCAR (87 aa)) is the Ig-like domain. An intrachain disulfide couples C41 to C115. The tract at residues 50-54 (DYYIN) is complementarity-determining-1. The interval 55-68 (WVKQRPGQGLEWIG) is framework-2. The complementarity-determining-2 stretch occupies residues 69-85 (WIYPGSGNTKYNEKFKG). The tract at residues 86-117 (KATLTVDTSSSTAYMQLSSLTSEDSAVYFCAR) is framework-3.

This chain is Immunoglobulin heavy variable 1-84, found in Mus musculus (Mouse).